The sequence spans 358 residues: Protein RecA (358 aa).

Glycine 76–threonine 83 contacts ATP.

Belongs to the RecA family.

The protein resides in the cytoplasm. Can catalyze the hydrolysis of ATP in the presence of single-stranded DNA, the ATP-dependent uptake of single-stranded DNA by duplex DNA, and the ATP-dependent hybridization of homologous single-stranded DNAs. It interacts with LexA causing its activation and leading to its autocatalytic cleavage. This Rhodospirillum centenum (strain ATCC 51521 / SW) protein is Protein RecA.